The sequence spans 614 residues: Syringomycin synthase SyrB1 (614 aa).

In terms of domain architecture, Carrier spans K535–L610. An O-(pantetheine 4'-phosphoryl)serine modification is found at S570.

This sequence belongs to the ATP-dependent AMP-binding enzyme family. Requires pantetheine 4'-phosphate as cofactor.

It carries out the reaction holo-[peptidyl-carrier protein] + L-threonine + ATP = L-threonyl-[peptidyl-carrier protein] + AMP + diphosphate. Its function is as follows. Involved in the biosynthesis of syringomycin E, a cyclic lipodepsinonapeptide toxin with phytotoxic activity. Specifically adenylates L-threonine and loads it onto its peptidyl carrier domain, via a thioester linkage to the phosphopanthetheine moiety. Is highly specific for L-threonine. The polypeptide is Syringomycin synthase SyrB1 (Pseudomonas syringae pv. syringae).